The following is a 189-amino-acid chain: Xanthine phosphoribosyltransferase (189 aa).

Residues L20 and N27 each contribute to the xanthine site. 5-phospho-alpha-D-ribose 1-diphosphate is bound at residue 128–132 (ANGEA). K156 is a binding site for xanthine.

This sequence belongs to the purine/pyrimidine phosphoribosyltransferase family. Xpt subfamily. As to quaternary structure, homodimer.

The protein localises to the cytoplasm. It carries out the reaction XMP + diphosphate = xanthine + 5-phospho-alpha-D-ribose 1-diphosphate. It participates in purine metabolism; XMP biosynthesis via salvage pathway; XMP from xanthine: step 1/1. Its function is as follows. Converts the preformed base xanthine, a product of nucleic acid breakdown, to xanthosine 5'-monophosphate (XMP), so it can be reused for RNA or DNA synthesis. In Clostridium acetobutylicum (strain ATCC 824 / DSM 792 / JCM 1419 / IAM 19013 / LMG 5710 / NBRC 13948 / NRRL B-527 / VKM B-1787 / 2291 / W), this protein is Xanthine phosphoribosyltransferase.